A 472-amino-acid chain; its full sequence is Kynureninase 1 (472 aa).

Pyridoxal 5'-phosphate is bound by residues leucine 146, threonine 147, 174 to 177, serine 231, aspartate 260, histidine 263, and tyrosine 285; that span reads FPSD. N6-(pyridoxal phosphate)lysine is present on lysine 286. Pyridoxal 5'-phosphate-binding residues include tryptophan 326 and asparagine 354.

The protein belongs to the kynureninase family. As to quaternary structure, homodimer. Requires pyridoxal 5'-phosphate as cofactor.

It is found in the cytoplasm. It carries out the reaction L-kynurenine + H2O = anthranilate + L-alanine + H(+). The catalysed reaction is 3-hydroxy-L-kynurenine + H2O = 3-hydroxyanthranilate + L-alanine + H(+). It functions in the pathway amino-acid degradation; L-kynurenine degradation; L-alanine and anthranilate from L-kynurenine: step 1/1. Its pathway is cofactor biosynthesis; NAD(+) biosynthesis; quinolinate from L-kynurenine: step 2/3. Its function is as follows. Catalyzes the cleavage of L-kynurenine (L-Kyn) and L-3-hydroxykynurenine (L-3OHKyn) into anthranilic acid (AA) and 3-hydroxyanthranilic acid (3-OHAA), respectively. In Aspergillus niger (strain ATCC MYA-4892 / CBS 513.88 / FGSC A1513), this protein is Kynureninase 1 (bna5-1).